The sequence spans 309 residues: uncharacterized protein (309 aa).

The Radical SAM core domain occupies 17-254; sequence RYGQKVHKLT…AGEMIRHTPP (238 aa). Positions 33, 45, and 48 each coordinate [4Fe-4S] cluster.

The protein belongs to the radical SAM superfamily. Requires [4Fe-4S] cluster as cofactor.

This is an uncharacterized protein from Escherichia coli O157:H7.